We begin with the raw amino-acid sequence, 365 residues long: 3-methyl-L-tyrosine peroxygenase (365 aa).

Heme is bound at residue 313 to 317 (HIGVC).

The cofactor is heme.

It catalyses the reaction 3-methyl-L-tyrosine + H2O2 = 5-hydroxy-3-methyl-L-tyrosine + H2O. Its pathway is antibiotic biosynthesis. Its function is as follows. Heme-containing peroxygenase that mediates the hydroxylation of 3-methyl-L-tyrosine (3-Me-Tyr) into 3-hydroxy-5-methyl-L-tyrosine (3-OH-5-Me-Tyr) in biosynthesis of saframycin A, a potent antitumor antibiotic that belongs to the tetrahydroisoquinoline family. Involved in biosynthesis of 3-hydroxy-5-methyl-O-methyltyrosine (3-OH-5-Me-OMe-Tyr), a core structure of saframycin A. The protein is 3-methyl-L-tyrosine peroxygenase of Streptomyces lavendulae.